A 109-amino-acid chain; its full sequence is Large ribosomal subunit protein eL30 (109 aa).

It belongs to the eukaryotic ribosomal protein eL30 family.

This chain is Large ribosomal subunit protein eL30, found in Methanopyrus kandleri (strain AV19 / DSM 6324 / JCM 9639 / NBRC 100938).